The following is a 557-amino-acid chain: IgE-binding protein (557 aa).

The interval 113–172 (DGLGKPALSSSEAGEESSSEETDWEEEAAHYQPANWSRKKPKAAGEGQFADWPQGSRLQG) is disordered. Over residues 125–138 (AGEESSSEETDWEE) the composition is skewed to acidic residues. Positions 344-534 (TAIRPGRRSR…TAAERHVQSQ (191 aa)) constitute an Integrase catalytic domain.

The protein is IgE-binding protein (Iap) of Mus musculus (Mouse).